The chain runs to 228 residues: Ribonuclease 3 (228 aa).

An RNase III domain is found at 3–132 (IRPLEEHLGI…FLGALYLDQG (130 aa)). Glutamate 45 contacts Mg(2+). The active site involves aspartate 49. The Mg(2+) site is built by aspartate 118 and glutamate 121. Glutamate 121 is a catalytic residue. A DRBM domain is found at 158-227 (DYKSQLQEFV…AKNALDSINN (70 aa)). A disordered region spans residues 205–228 (GTGRTKKEAEQRAAKNALDSINNS).

The protein belongs to the ribonuclease III family. As to quaternary structure, homodimer. Mg(2+) serves as cofactor.

It is found in the cytoplasm. It catalyses the reaction Endonucleolytic cleavage to 5'-phosphomonoester.. Its function is as follows. Digests double-stranded RNA. Involved in the processing of primary rRNA transcript to yield the immediate precursors to the large and small rRNAs (23S and 16S). Processes some mRNAs, and tRNAs when they are encoded in the rRNA operon. Processes pre-crRNA and tracrRNA of type II CRISPR loci if present in the organism. This Oceanobacillus iheyensis (strain DSM 14371 / CIP 107618 / JCM 11309 / KCTC 3954 / HTE831) protein is Ribonuclease 3.